Here is a 382-residue protein sequence, read N- to C-terminus: Gap junction alpha-1 protein (382 aa).

The Cytoplasmic segment spans residues G2–K23. S5 is subject to Phosphoserine. Residues V24 to A44 form a helical membrane-spanning segment. Topologically, residues W45–R76 are extracellular. Intrachain disulfides connect C54-C192 and C187-C198. A helical membrane pass occupies residues F77–F97. Residues Y98–Y155 lie on the Cytoplasmic side of the membrane. K144 participates in a covalent cross-link: Glycyl lysine isopeptide (Lys-Gly) (interchain with G-Cter in SUMO). A helical transmembrane segment spans residues I156–I176. Topologically, residues Y177 to T207 are extracellular. A helical membrane pass occupies residues I208 to L228. The Cytoplasmic portion of the chain corresponds to F229–I382. K237 participates in a covalent cross-link: Glycyl lysine isopeptide (Lys-Gly) (interchain with G-Cter in SUMO). The tract at residues S244–I382 is interaction with NOV. Position 247 is a phosphotyrosine (Y247). Phosphoserine is present on residues S255, S257, and S262. An interaction with UBQLN4 region spans residues K264–I382. S-nitrosocysteine is present on C271. T275 is subject to Phosphothreonine. S306 and S314 each carry phosphoserine. A compositionally biased stretch (polar residues) spans Q317–A332. The tract at residues Q317 to I382 is disordered. The residue at position 325 (S325) is a Phosphoserine; by CK1. T326 is modified (phosphothreonine). Phosphoserine; by CK1 occurs at positions 328 and 330. 2 positions are modified to phosphoserine: S344 and S365. Residues R362–R374 are compositionally biased toward low complexity. The residue at position 368 (S368) is a Phosphoserine; by PKC/PRKCG and PKC/PRKCD. Residues S369 and S373 each carry the phosphoserine modification.

Belongs to the connexin family. Alpha-type (group II) subfamily. A connexon is composed of a hexamer of connexins. Interacts with SGSM3. Interacts with RIC1/CIP150. Interacts with CNST and CSNK1D. Interacts (via C-terminus) with TJP1. Interacts (via C-terminus) with SRC (via SH3 domain). Interacts (not ubiquitinated) with UBQLN4 (via UBA domain). Interacts with NOV. Interacts with TMEM65. Interacts with ANK3/ANKG and PKP2. Phosphorylation at Ser-325, Ser-328 and Ser-330 by CK1 modulates gap junction assembly. Phosphorylated at Ser-368 by PRKCG; phosphorylation induces disassembly of gap junction plaques and inhibition of gap junction activity. Phosphorylation at Ser-368 by PRKCD triggers its internalization into small vesicles leading to proteasome-mediated degradation. In terms of processing, sumoylated with SUMO1, SUMO2 and SUMO3, which may regulate the level of functional Cx43 gap junctions at the plasma membrane. May be desumoylated by SENP1 or SENP2. Post-translationally, S-nitrosylation at Cys-271 is enriched at the muscle endothelial gap junction in arteries, it augments channel permeability and may regulate of smooth muscle cell to endothelial cell communication. Acetylated in the developing cortex; leading to delocalization from the cell membrane.

Its subcellular location is the cell membrane. The protein resides in the cell junction. It is found in the gap junction. It localises to the endoplasmic reticulum. Functionally, gap junction protein that acts as a regulator of bladder capacity. A gap junction consists of a cluster of closely packed pairs of transmembrane channels, the connexons, through which materials of low MW diffuse from one cell to a neighboring cell. May play a critical role in the physiology of hearing by participating in the recycling of potassium to the cochlear endolymph. Negative regulator of bladder functional capacity: acts by enhancing intercellular electrical and chemical transmission, thus sensitizing bladder muscles to cholinergic neural stimuli and causing them to contract. May play a role in cell growth inhibition through the regulation of NOV expression and localization. Plays an essential role in gap junction communication in the ventricles. This is Gap junction alpha-1 protein (GJA1) from Ursus americanus (American black bear).